We begin with the raw amino-acid sequence, 81 residues long: MMNVITVVGIILSVVCTISDAEGVDCTLPSDTGRCKAYFIRYFYNQKAGECQKFVYGGCEGNSNNFLTKSDCCKQCSPGKC.

Positions 1 to 21 are cleaved as a signal peptide; that stretch reads MMNVITVVGIILSVVCTISDA. Residues 26–76 enclose the BPTI/Kunitz inhibitor domain; the sequence is CTLPSDTGRCKAYFIRYFYNQKAGECQKFVYGGCEGNSNNFLTKSDCCKQC. 4 cysteine pairs are disulfide-bonded: Cys26–Cys76, Cys35–Cys59, Cys51–Cys72, and Cys73–Cys81.

It belongs to the venom Kunitz-type family. Scorpion delta-Ktx subfamily. Delta-Ktx 3 sub-subfamily. Expressed by the venom gland.

It is found in the secreted. Functionally, multifunctional toxin which inhibits serine proteases and potassium channels. Potently inhibits plasmin (Ki=8.75 nM), trypsin, chymotrypsin and elastase. Also inhibits mKv1.3/KCNA3 potassium channel currents (IC(50)=371.3 nM). The chain is Kunitz-type serine protease inhibitor BmKTT-2 from Olivierus martensii (Manchurian scorpion).